Consider the following 156-residue polypeptide: Small ribosomal subunit protein uS7 (156 aa).

This sequence belongs to the universal ribosomal protein uS7 family. As to quaternary structure, part of the 30S ribosomal subunit. Contacts proteins S9 and S11.

Its function is as follows. One of the primary rRNA binding proteins, it binds directly to 16S rRNA where it nucleates assembly of the head domain of the 30S subunit. Is located at the subunit interface close to the decoding center, probably blocks exit of the E-site tRNA. In Cupriavidus necator (strain ATCC 17699 / DSM 428 / KCTC 22496 / NCIMB 10442 / H16 / Stanier 337) (Ralstonia eutropha), this protein is Small ribosomal subunit protein uS7.